Here is a 558-residue protein sequence, read N- to C-terminus: Potassium-transporting ATPase potassium-binding subunit (558 aa).

The next 12 helical transmembrane spans lie at 1–21 (MEII…SGYL), 66–86 (FNGF…WLFL), 127–147 (MIVM…VCIA), 166–186 (IVRF…ILLM), 245–265 (IWSD…MLFL), 281–301 (ALIL…LTMW), 327–347 (FGAG…TGSV), 354–374 (LTPL…VFGG), 377–397 (VGLM…SLMV), 416–436 (IVLV…LAFM), 482–502 (ISTG…QLLI), and 531–551 (IVFI…LGPI).

It belongs to the KdpA family. As to quaternary structure, the system is composed of three essential subunits: KdpA, KdpB and KdpC.

It is found in the cell membrane. In terms of biological role, part of the high-affinity ATP-driven potassium transport (or Kdp) system, which catalyzes the hydrolysis of ATP coupled with the electrogenic transport of potassium into the cytoplasm. This subunit binds the extracellular potassium ions and delivers the ions to the membrane domain of KdpB through an intramembrane tunnel. This Staphylococcus aureus (strain bovine RF122 / ET3-1) protein is Potassium-transporting ATPase potassium-binding subunit.